The following is a 1059-amino-acid chain: MNNGKVRIYELSKELNLENKDILAVCQRLNISVKSHSSTITESEAELIRTTAENLPHSPSLSAAPEKSNSQNQDSGIGYNEQKKQQILEVRKPKPLLEKSQQKNHSKINNNLVTTPPNTSVLNNQVERVGISRPNSSLKSETLKDNSEVGDNSLVQHPNRPLNKDNTVKENYVPQKTDSNEKSKVEVPKLVAPPARPAPPSLNRNLRNTGVNKPNQKNKKPKQEGKKRKDKEEKPFEKPAIVSKKENKDTSIEKPTIASKKENKDTFQNRESVKTSASDTSSQLKPKHREKPTVKLKQEQKPQLAPKPKLTTPLKEESTDVNLGLDLEGKEPEDNVAETVSYDLEKPRRKTIAPSKPTLTKDKKVSKWEEEEEDTSEVIQKNAKSSAKNKRLRLKPLLEDEDEELAELLNKPAPVTMSLSLARPAKPKSFTEKNKPQPGSNISNLKKKSSQSHESVQSESNEQTQSAELKPVEKLVISASMTVQELALALAIPETEIIRRLFMKGIAVNITESLDIPTIEMVVKEEGIPIEVPEEQSAAKKTTEILEETDLASLQRRPPVVTIMGHVDHGKTSLLDSIRATKVAAGEAGGITQHIGAYHVDVEHEGQMQQVVFLDTPGHEAFTAMRARGARVTDVAVLVVAADDGVQPQTIEAISHAKAAEVPLIVAINKIDKEEANPDRVKQELMEHGLVPEEWGGDAIMVPVSAIQKQNLDTLLEMILLVSEVEDLQANPERLAKGTVIEANLDKARGPVATLLVQNGTLKVGDIIVAGSVYGKVRAMIDDRGYRVDKASPSFAVEVLGLRDVPQAGDEFKVFKNEKEASAITTERADAKRESRIMRRTSLGAVSVRAQEGELKELNLILKGDVQGSIEAIVAALRQLPQKEVQLRLLLSGAGEVTETDIDLAAASEAVIIGFNTTMASGARQAADAAGVDVREYNVIYKLLDDIQGAMEGLLDPELIEEPLGQVEVRAVFTINRGAVAGCYVLSGKVVRNCKVRVRRNGEIVYQGILDSLRRMKDDVKEVNAGYECGVSFDNFNNWSEGDIIEAYQMVTKRRKLST.

Composition is skewed to polar residues over residues 55–75 (LPHS…NQDS) and 107–126 (KINN…NNQV). Disordered regions lie at residues 55–81 (LPHS…GYNE), 93–394 (PKPL…RLRL), and 418–468 (SLSL…QSAE). Residues 178–187 (DSNEKSKVEV) are compositionally biased toward basic and acidic residues. A compositionally biased stretch (polar residues) spans 202-211 (LNRNLRNTGV). Residues 216–229 (QKNKKPKQEGKKRK) show a composition bias toward basic residues. Composition is skewed to basic and acidic residues over residues 230-252 (DKEE…DTSI) and 259-273 (SKKE…RESV). The segment covering 274–284 (KTSASDTSSQL) has biased composition (polar residues). 2 stretches are compositionally biased toward basic and acidic residues: residues 291-300 (KPTVKLKQEQ) and 359-368 (LTKDKKVSKW). Over residues 452–463 (SHESVQSESNEQ) the composition is skewed to low complexity. The tr-type G domain maps to 556–733 (RRPPVVTIMG…EVEDLQANPE (178 aa)). The tract at residues 565 to 572 (GHVDHGKT) is G1. 565–572 (GHVDHGKT) provides a ligand contact to GTP. The G2 stretch occupies residues 590–594 (GITQH). Residues 615–618 (DTPG) are G3. GTP contacts are provided by residues 615 to 619 (DTPGH) and 669 to 672 (NKID). Residues 669–672 (NKID) are G4. Residues 705–707 (SAI) form a G5 region.

The protein belongs to the TRAFAC class translation factor GTPase superfamily. Classic translation factor GTPase family. IF-2 subfamily.

It is found in the cytoplasm. One of the essential components for the initiation of protein synthesis. Protects formylmethionyl-tRNA from spontaneous hydrolysis and promotes its binding to the 30S ribosomal subunits. Also involved in the hydrolysis of GTP during the formation of the 70S ribosomal complex. The sequence is that of Translation initiation factor IF-2 from Trichodesmium erythraeum (strain IMS101).